A 284-amino-acid polypeptide reads, in one-letter code: Gigasin-3a (284 aa).

A disordered region spans residues 202–284 (GLDNPLPNPR…FKAGRKNNRN (83 aa)). A compositionally biased stretch (low complexity) spans 223–245 (SSPLPESTPKSSTKTSSASPIKS). Residues 246-257 (RQGKKLRGKKQN) show a composition bias toward basic residues. Residues 258-267 (KTGNTRFTYR) show a composition bias toward polar residues. Basic residues predominate over residues 268–284 (NNKRNIKFKAGRKNNRN).

As to expression, component of the organic matrix of calcified shell layers.

This is Gigasin-3a from Magallana gigas (Pacific oyster).